A 31-amino-acid polypeptide reads, in one-letter code: Photosystem II reaction center protein T (31 aa).

Residues 3 to 23 traverse the membrane as a helical segment; the sequence is AFSYVLILTLALVTLFFAVAF.

The protein belongs to the PsbT family. In terms of assembly, PSII is composed of 1 copy each of membrane proteins PsbA, PsbB, PsbC, PsbD, PsbE, PsbF, PsbH, PsbI, PsbJ, PsbK, PsbL, PsbM, PsbT, PsbX, PsbY, Psb30/Ycf12, peripheral proteins PsbO, CyanoQ (PsbQ), PsbU, PsbV and a large number of cofactors. It forms dimeric complexes.

Its subcellular location is the cellular thylakoid membrane. Found at the monomer-monomer interface of the photosystem II (PS II) dimer, plays a role in assembly and dimerization of PSII. PSII is a light-driven water plastoquinone oxidoreductase, using light energy to abstract electrons from H(2)O, generating a proton gradient subsequently used for ATP formation. This chain is Photosystem II reaction center protein T, found in Prochlorococcus marinus (strain NATL2A).